A 454-amino-acid chain; its full sequence is Dihydrolipoyllysine-residue succinyltransferase component of 2-oxoglutarate dehydrogenase complex, mitochondrial (454 aa).

The N-terminal 68 residues, 1-68 (MLSRSRCVSR…RFFQTTAVCK (68 aa)), are a transit peptide targeting the mitochondrion. One can recognise a Lipoyl-binding domain in the interval 71-145 (VITVQTPAFA…EGGTPLFTLR (75 aa)). Serine 82 carries the phosphoserine modification. At lysine 111 the chain carries N6-lipoyllysine. The tract at residues 147–227 (TGAAPAKAKP…KGLRSEHREK (81 aa)) is disordered. The segment covering 149–163 (AAPAKAKPAETPAPA) has biased composition (low complexity). Lysine 155 carries the N6-acetyllysine modification. Positions 186–197 (PPVPSPSQPPSS) are enriched in pro residues. Low complexity predominate over residues 198-217 (KPVSAIKPTAAPPLAEAGAA). Lysine 268, lysine 273, lysine 274, lysine 278, and lysine 308 each carry N6-acetyllysine. Active-site residues include histidine 425 and aspartate 429.

Belongs to the 2-oxoacid dehydrogenase family. The 2-oxoglutarate dehydrogenase complex is composed of OGDH (2-oxoglutarate dehydrogenase; E1), DLST (dihydrolipoamide succinyltransferase; E2), DLD (dihydrolipoamide dehydrogenase; E3) and the assembly factor KGD4. It contains multiple copies of the three enzymatic components (E1, E2 and E3). In the nucleus, the 2-oxoglutarate dehydrogenase complex associates with KAT2A. Interacts with ABHD11; this interaction maintains the functional lipoylation of the 2-oxoglutarate dehydrogenase complex. (R)-lipoate is required as a cofactor.

It localises to the mitochondrion matrix. The protein resides in the nucleus. It carries out the reaction N(6)-[(R)-dihydrolipoyl]-L-lysyl-[protein] + succinyl-CoA = N(6)-[(R)-S(8)-succinyldihydrolipoyl]-L-lysyl-[protein] + CoA. The protein operates within amino-acid degradation; L-lysine degradation via saccharopine pathway; glutaryl-CoA from L-lysine: step 6/6. It participates in carbohydrate metabolism; tricarboxylic acid cycle. Functionally, dihydrolipoamide succinyltransferase (E2) component of the 2-oxoglutarate dehydrogenase complex. The 2-oxoglutarate dehydrogenase complex catalyzes the overall conversion of 2-oxoglutarate to succinyl-CoA and CO(2). The 2-oxoglutarate dehydrogenase complex is mainly active in the mitochondrion. A fraction of the 2-oxoglutarate dehydrogenase complex also localizes in the nucleus and is required for lysine succinylation of histones: associates with KAT2A on chromatin and provides succinyl-CoA to histone succinyltransferase KAT2A. This chain is Dihydrolipoyllysine-residue succinyltransferase component of 2-oxoglutarate dehydrogenase complex, mitochondrial, found in Mus musculus (Mouse).